The following is a 155-amino-acid chain: Small ribosomal subunit protein uS7c (155 aa).

Belongs to the universal ribosomal protein uS7 family. Part of the 30S ribosomal subunit.

Its subcellular location is the plastid. Its function is as follows. One of the primary rRNA binding proteins, it binds directly to 16S rRNA where it nucleates assembly of the head domain of the 30S subunit. In Aneura mirabilis (Parasitic liverwort), this protein is Small ribosomal subunit protein uS7c (rps7).